We begin with the raw amino-acid sequence, 334 residues long: N-acetyl-gamma-glutamyl-phosphate reductase (334 aa).

Cys154 is an active-site residue.

This sequence belongs to the NAGSA dehydrogenase family. Type 1 subfamily.

It localises to the cytoplasm. The enzyme catalyses N-acetyl-L-glutamate 5-semialdehyde + phosphate + NADP(+) = N-acetyl-L-glutamyl 5-phosphate + NADPH + H(+). It participates in amino-acid biosynthesis; L-arginine biosynthesis; N(2)-acetyl-L-ornithine from L-glutamate: step 3/4. Functionally, catalyzes the NADPH-dependent reduction of N-acetyl-5-glutamyl phosphate to yield N-acetyl-L-glutamate 5-semialdehyde. The chain is N-acetyl-gamma-glutamyl-phosphate reductase from Salmonella typhi.